Here is a 556-residue protein sequence, read N- to C-terminus: (S)-N-methylcanadine 1-hydroxylase CYP82Y1 (556 aa).

A helical transmembrane segment spans residues Thr18–Tyr38. Position 500 (Cys500) interacts with heme.

Belongs to the cytochrome P450 family. The cofactor is heme. As to expression, highly expressed in capsules. Expressed is stems.

The protein localises to the membrane. The catalysed reaction is (S)-cis-N-methylcanadine + reduced [NADPH--hemoprotein reductase] + O2 = (S)-1-hydroxy-N-methylcanadine + oxidized [NADPH--hemoprotein reductase] + H2O + H(+). It functions in the pathway alkaloid biosynthesis. Functionally, cytochrome P450 involved in the biosynthesis of the benzylisoquinoline alkaloid noscapine. Converts (S)-N-methylcanadine to (S)-1-hydroxy-N-methylcanadine. The polypeptide is (S)-N-methylcanadine 1-hydroxylase CYP82Y1 (Papaver somniferum (Opium poppy)).